Reading from the N-terminus, the 427-residue chain is MNNLEIFEESKKYMPGGVNSPVRCFKEMGMNPPVIKSGKGVIIRDEDGKEYIDFVLAWGPLLLGHCDEDVVKAIKETSENALAFGAPTKLELELSKFMCENLDNVEMIRMVNSGTEATMSAVKLARGYTGKSKIVKFAGCYHGHFDGFLIEAGSGVLTEGIPGSLGVPKESVENTLIGLYNDKVQIKELFKKYGNEIAAVIIEPVAGNMGVIKANEDFIKELRDLCDEYGALLIFDEVMTGFRVAFKGAQTLFDIKPDLITYAKIMGGGLPCGAYAGKKEIMEKLSPCGGVYQAGTMSGNPIVMAAGLATLTKLKNNTEFYDNVEKMGKKLQDGLIKISEENNLPLIVNRVGGMLTLFFTELEKVNTYEDVKTCDNERFKRYFKHMLNEGFNIAPSQFEAMFLSVKHTEEHIDKFLDAFKRFAINEK.

Position 264 is an N6-(pyridoxal phosphate)lysine (Lys264).

This sequence belongs to the class-III pyridoxal-phosphate-dependent aminotransferase family. HemL subfamily. In terms of assembly, homodimer. The cofactor is pyridoxal 5'-phosphate.

The protein resides in the cytoplasm. The catalysed reaction is (S)-4-amino-5-oxopentanoate = 5-aminolevulinate. It participates in porphyrin-containing compound metabolism; protoporphyrin-IX biosynthesis; 5-aminolevulinate from L-glutamyl-tRNA(Glu): step 2/2. This Clostridium botulinum (strain Alaska E43 / Type E3) protein is Glutamate-1-semialdehyde 2,1-aminomutase.